Consider the following 457-residue polypeptide: Histidine--tRNA ligase (457 aa).

Belongs to the class-II aminoacyl-tRNA synthetase family. Homodimer.

The protein localises to the cytoplasm. It carries out the reaction tRNA(His) + L-histidine + ATP = L-histidyl-tRNA(His) + AMP + diphosphate + H(+). This is Histidine--tRNA ligase from Mesoplasma florum (strain ATCC 33453 / NBRC 100688 / NCTC 11704 / L1) (Acholeplasma florum).